Reading from the N-terminus, the 89-residue chain is Mitochondrial import inner membrane translocase subunit Tim9 (89 aa).

Residue Ala-2 is modified to N-acetylalanine. Residues 28 to 52 carry the Twin CX3C motif motif; it reads CFLDCVKDFTTREVKPEEVTCSEHC. Cystine bridges form between Cys-28/Cys-52 and Cys-32/Cys-48.

Belongs to the small Tim family. In terms of assembly, heterohexamer; composed of 3 copies of TIMM9 and 3 copies of TIMM10/TIM10A, named soluble 70 kDa complex. The complex forms a 6-bladed alpha-propeller structure and associates with the TIMM22 component of the TIM22 complex. Interacts with multi-pass transmembrane proteins in transit. Also forms a complex composed of TIMM9, TIMM10/TIM10A and FXC1/TIM10B.

It localises to the mitochondrion inner membrane. Mitochondrial intermembrane chaperone that participates in the import and insertion of multi-pass transmembrane proteins into the mitochondrial inner membrane. May also be required for the transfer of beta-barrel precursors from the TOM complex to the sorting and assembly machinery (SAM complex) of the outer membrane. Acts as a chaperone-like protein that protects the hydrophobic precursors from aggregation and guide them through the mitochondrial intermembrane space. This chain is Mitochondrial import inner membrane translocase subunit Tim9 (Timm9), found in Rattus norvegicus (Rat).